A 591-amino-acid polypeptide reads, in one-letter code: V-type ATP synthase alpha chain (591 aa).

Position 233–240 (Gly233–Thr240) interacts with ATP.

Belongs to the ATPase alpha/beta chains family.

It carries out the reaction ATP + H2O + 4 H(+)(in) = ADP + phosphate + 5 H(+)(out). In terms of biological role, produces ATP from ADP in the presence of a proton gradient across the membrane. The V-type alpha chain is a catalytic subunit. This Streptococcus pneumoniae (strain ATCC 700669 / Spain 23F-1) protein is V-type ATP synthase alpha chain.